Here is a 619-residue protein sequence, read N- to C-terminus: Leucine aminopeptidase 2 (619 aa).

A peptide contacts are provided by residues 141 to 143 (QCQ) and 273 to 278 (PYGGME). His302 provides a ligand contact to Zn(2+). The active-site Proton acceptor is the Glu303. 2 residues coordinate Zn(2+): His306 and Glu325. The Proton donor role is filled by Tyr390.

This sequence belongs to the peptidase M1 family. It depends on Zn(2+) as a cofactor.

The protein resides in the cytoplasm. The protein localises to the nucleus. It catalyses the reaction an epoxide + H2O = an ethanediol. Its function is as follows. Aminopeptidase that preferentially cleaves di- and tripeptides. Also has low epoxide hydrolase activity (in vitro). Can hydrolyze the epoxide leukotriene LTA(4) but it forms preferentially 5,6-dihydroxy-7,9,11,14-eicosatetraenoic acid rather than the cytokine leukotriene B(4) as the product compared to the homologous mammalian enzyme (in vitro). In Coccidioides immitis (strain RS) (Valley fever fungus), this protein is Leucine aminopeptidase 2.